An 898-amino-acid chain; its full sequence is Tight junction protein ZO-3 (898 aa).

The PDZ 1 domain occupies Thr-11–Arg-93. Residues Pro-98–Gly-165 are disordered. A phosphoserine mark is found at Ser-128, Ser-156, Ser-161, Ser-195, and Ser-313. In terms of domain architecture, PDZ 2 spans Ser-187–Arg-264. Residues Leu-295–Pro-368 form a disordered region. Residues Arg-312–Ser-349 show a composition bias toward basic and acidic residues. Thr-319 is subject to Phosphothreonine. A phosphoserine mark is found at Ser-321 and Ser-360. The PDZ 3 domain maps to Asp-369–Leu-435. The region spanning Gly-464–Ala-538 is the SH3 domain. One can recognise a Guanylate kinase-like domain in the interval Leu-569–Arg-750. Position 580 is a phosphoserine (Ser-580). The tract at residues Thr-759–Leu-898 is disordered. Over residues Asp-762 to Leu-772 the composition is skewed to acidic residues. Residues Ala-780–Ser-790 are compositionally biased toward low complexity. Over residues Tyr-796–Glu-814 the composition is skewed to acidic residues. Residues Glu-831–Arg-841 are compositionally biased toward basic and acidic residues. Phosphoserine occurs at positions 835, 884, and 885.

This sequence belongs to the MAGUK family. As to quaternary structure, heterodimer with TJP1. Interacts with UBN1. Interacts with occludin OCLN and claudins. Interacts with PATJ. Interacts with FASLG. Interacts with CCND1. Phosphorylated.

The protein localises to the cell membrane. Its subcellular location is the cell junction. It is found in the tight junction. The protein resides in the nucleus. Its function is as follows. TJP1, TJP2, and TJP3 are closely related scaffolding proteins that link tight junction (TJ) transmembrane proteins such as claudins, junctional adhesion molecules, and occludin to the actin cytoskeleton. The tight junction acts to limit movement of substances through the paracellular space and as a boundary between the compositionally distinct apical and basolateral plasma membrane domains of epithelial and endothelial cells. Binds and recruits PATJ to tight junctions where it connects and stabilizes apical and lateral components of tight junctions. Promotes cell-cycle progression through the sequestration of cyclin D1 (CCND1) at tight junctions during mitosis which prevents CCND1 degradation during M-phase and enables S-phase transition. With TJP1 and TJP2, participates in the junctional retention and stability of the transcription factor DBPA, but is not involved in its shuttling to the nucleus. Contrary to TJP2, TJP3 is dispensable for individual viability, embryonic development, epithelial differentiation, and the establishment of TJs, at least in the laboratory environment. This is Tight junction protein ZO-3 (TJP3) from Canis lupus familiaris (Dog).